Consider the following 192-residue polypeptide: Phosphoheptose isomerase (192 aa).

Residues 37–192 (LADSFKAGGK…IQLIEKEMVK (156 aa)) form the SIS domain. A substrate-binding site is contributed by 52 to 54 (NGG). Zn(2+) contacts are provided by H61 and E65. Residues E65, 93 to 94 (ND), 119 to 121 (STS), S124, and Q172 contribute to the substrate site. Zn(2+) contacts are provided by Q172 and H180.

It belongs to the SIS family. GmhA subfamily. As to quaternary structure, homotetramer. Requires Zn(2+) as cofactor.

The protein resides in the cytoplasm. The catalysed reaction is 2 D-sedoheptulose 7-phosphate = D-glycero-alpha-D-manno-heptose 7-phosphate + D-glycero-beta-D-manno-heptose 7-phosphate. Its pathway is carbohydrate biosynthesis; D-glycero-D-manno-heptose 7-phosphate biosynthesis; D-glycero-alpha-D-manno-heptose 7-phosphate and D-glycero-beta-D-manno-heptose 7-phosphate from sedoheptulose 7-phosphate: step 1/1. Catalyzes the isomerization of sedoheptulose 7-phosphate in D-glycero-D-manno-heptose 7-phosphate. The protein is Phosphoheptose isomerase of Escherichia coli O139:H28 (strain E24377A / ETEC).